We begin with the raw amino-acid sequence, 468 residues long: Argininosuccinate lyase (468 aa).

This sequence belongs to the lyase 1 family. Argininosuccinate lyase subfamily.

It is found in the cytoplasm. It catalyses the reaction 2-(N(omega)-L-arginino)succinate = fumarate + L-arginine. Its pathway is amino-acid biosynthesis; L-arginine biosynthesis; L-arginine from L-ornithine and carbamoyl phosphate: step 3/3. This chain is Argininosuccinate lyase, found in Cutibacterium acnes (strain DSM 16379 / KPA171202) (Propionibacterium acnes).